The following is a 390-amino-acid chain: Carbamoyl phosphate synthase small chain (390 aa).

A CPSase region spans residues Met1 to Glu198. Residues Ser53, Gly250, and Gly252 each coordinate L-glutamine. Residues Arg202–Ala390 form the Glutamine amidotransferase type-1 domain. Cys279 acts as the Nucleophile in catalysis. Positions 280, 283, 321, 323, and 324 each coordinate L-glutamine. Residues His363 and Glu365 contribute to the active site.

Belongs to the CarA family. As to quaternary structure, composed of two chains; the small (or glutamine) chain promotes the hydrolysis of glutamine to ammonia, which is used by the large (or ammonia) chain to synthesize carbamoyl phosphate. Tetramer of heterodimers (alpha,beta)4.

The catalysed reaction is hydrogencarbonate + L-glutamine + 2 ATP + H2O = carbamoyl phosphate + L-glutamate + 2 ADP + phosphate + 2 H(+). It carries out the reaction L-glutamine + H2O = L-glutamate + NH4(+). Its pathway is amino-acid biosynthesis; L-arginine biosynthesis; carbamoyl phosphate from bicarbonate: step 1/1. The protein operates within pyrimidine metabolism; UMP biosynthesis via de novo pathway; (S)-dihydroorotate from bicarbonate: step 1/3. Small subunit of the glutamine-dependent carbamoyl phosphate synthetase (CPSase). CPSase catalyzes the formation of carbamoyl phosphate from the ammonia moiety of glutamine, carbonate, and phosphate donated by ATP, constituting the first step of 2 biosynthetic pathways, one leading to arginine and/or urea and the other to pyrimidine nucleotides. The small subunit (glutamine amidotransferase) binds and cleaves glutamine to supply the large subunit with the substrate ammonia. This Maricaulis maris (strain MCS10) (Caulobacter maris) protein is Carbamoyl phosphate synthase small chain.